A 143-amino-acid chain; its full sequence is Transcriptional regulator MraZ (143 aa).

SpoVT-AbrB domains follow at residues 5 to 47 (QYEH…SLEE) and 76 to 119 (AVEC…SKEV).

Belongs to the MraZ family. Forms oligomers.

The protein localises to the cytoplasm. The protein resides in the nucleoid. The chain is Transcriptional regulator MraZ from Thermoanaerobacter pseudethanolicus (strain ATCC 33223 / 39E) (Clostridium thermohydrosulfuricum).